We begin with the raw amino-acid sequence, 1169 residues long: Pesticidal crystal protein Cry1Gb (1169 aa).

Belongs to the delta endotoxin family.

In terms of biological role, promotes colloidosmotic lysis by binding to the midgut epithelial cells of lepidopteran larvae. Toxic to Pieris rapae. The polypeptide is Pesticidal crystal protein Cry1Gb (cry1Gb) (Bacillus thuringiensis subsp. wuhanensis).